The chain runs to 219 residues: Probable transaldolase (219 aa).

K83 (schiff-base intermediate with substrate) is an active-site residue.

The protein belongs to the transaldolase family. Type 3B subfamily.

It is found in the cytoplasm. The enzyme catalyses D-sedoheptulose 7-phosphate + D-glyceraldehyde 3-phosphate = D-erythrose 4-phosphate + beta-D-fructose 6-phosphate. Its pathway is carbohydrate degradation; pentose phosphate pathway; D-glyceraldehyde 3-phosphate and beta-D-fructose 6-phosphate from D-ribose 5-phosphate and D-xylulose 5-phosphate (non-oxidative stage): step 2/3. Transaldolase is important for the balance of metabolites in the pentose-phosphate pathway. The polypeptide is Probable transaldolase (Cereibacter sphaeroides (strain ATCC 17029 / ATH 2.4.9) (Rhodobacter sphaeroides)).